A 542-amino-acid chain; its full sequence is CTP synthase (542 aa).

An amidoligase domain region spans residues 1–265 (MARYVFITGG…DDEVLAAFGI (265 aa)). Residue serine 13 coordinates CTP. Serine 13 provides a ligand contact to UTP. ATP-binding positions include 14-19 (SLGKGI) and aspartate 71. Mg(2+) contacts are provided by aspartate 71 and glutamate 139. Residues 146 to 148 (DIE), 186 to 191 (KTKPTQ), and lysine 222 each bind CTP. UTP-binding positions include 186-191 (KTKPTQ) and lysine 222. The region spanning 291 to 541 (TIAIVGKYTG…IEAATEQSRL (251 aa)) is the Glutamine amidotransferase type-1 domain. Glycine 353 contributes to the L-glutamine binding site. The active-site Nucleophile; for glutamine hydrolysis is the cysteine 380. L-glutamine-binding positions include 381 to 384 (FGMQ), glutamate 404, and arginine 469. Active-site residues include histidine 514 and glutamate 516.

It belongs to the CTP synthase family. As to quaternary structure, homotetramer.

The enzyme catalyses UTP + L-glutamine + ATP + H2O = CTP + L-glutamate + ADP + phosphate + 2 H(+). It catalyses the reaction L-glutamine + H2O = L-glutamate + NH4(+). It carries out the reaction UTP + NH4(+) + ATP = CTP + ADP + phosphate + 2 H(+). It participates in pyrimidine metabolism; CTP biosynthesis via de novo pathway; CTP from UDP: step 2/2. Allosterically activated by GTP, when glutamine is the substrate; GTP has no effect on the reaction when ammonia is the substrate. The allosteric effector GTP functions by stabilizing the protein conformation that binds the tetrahedral intermediate(s) formed during glutamine hydrolysis. Inhibited by the product CTP, via allosteric rather than competitive inhibition. In terms of biological role, catalyzes the ATP-dependent amination of UTP to CTP with either L-glutamine or ammonia as the source of nitrogen. Regulates intracellular CTP levels through interactions with the four ribonucleotide triphosphates. This Rhizobium etli (strain CIAT 652) protein is CTP synthase.